Reading from the N-terminus, the 393-residue chain is Dual-specificity RNA methyltransferase RlmN (393 aa).

Residue Glu-114 is the Proton acceptor of the active site. Residues 120 to 359 (EGDRATLCVS…VIVRKTRGDD (240 aa)) form the Radical SAM core domain. Cys-127 and Cys-364 are disulfide-bonded. 3 residues coordinate [4Fe-4S] cluster: Cys-134, Cys-138, and Cys-141. Residues 188-189 (GE), Ser-220, 242-244 (SLH), and Asn-321 each bind S-adenosyl-L-methionine. Cys-364 functions as the S-methylcysteine intermediate in the catalytic mechanism.

The protein belongs to the radical SAM superfamily. RlmN family. It depends on [4Fe-4S] cluster as a cofactor.

The protein localises to the cytoplasm. It carries out the reaction adenosine(2503) in 23S rRNA + 2 reduced [2Fe-2S]-[ferredoxin] + 2 S-adenosyl-L-methionine = 2-methyladenosine(2503) in 23S rRNA + 5'-deoxyadenosine + L-methionine + 2 oxidized [2Fe-2S]-[ferredoxin] + S-adenosyl-L-homocysteine. The enzyme catalyses adenosine(37) in tRNA + 2 reduced [2Fe-2S]-[ferredoxin] + 2 S-adenosyl-L-methionine = 2-methyladenosine(37) in tRNA + 5'-deoxyadenosine + L-methionine + 2 oxidized [2Fe-2S]-[ferredoxin] + S-adenosyl-L-homocysteine. Its function is as follows. Specifically methylates position 2 of adenine 2503 in 23S rRNA and position 2 of adenine 37 in tRNAs. m2A2503 modification seems to play a crucial role in the proofreading step occurring at the peptidyl transferase center and thus would serve to optimize ribosomal fidelity. In Haemophilus ducreyi (strain 35000HP / ATCC 700724), this protein is Dual-specificity RNA methyltransferase RlmN.